We begin with the raw amino-acid sequence, 317 residues long: Probable cell division protein WhiA (317 aa).

The H-T-H motif DNA-binding region spans 278–311 (SLQGLGELLDPQVGKSGVNHRLRKIGEKADELRQ).

It belongs to the WhiA family.

In terms of biological role, involved in cell division and chromosome segregation. The polypeptide is Probable cell division protein WhiA (Lachnospira eligens (strain ATCC 27750 / DSM 3376 / VPI C15-48 / C15-B4) (Eubacterium eligens)).